The primary structure comprises 389 residues: GTPase Obg (389 aa).

The Obg domain maps to 1-159 (MKFVDEAVIK…RELRLELLLL (159 aa)). The 174-residue stretch at 160 to 333 (ADVGLLGMPN…LAEKLFDFIK (174 aa)) folds into the OBG-type G domain. Residues 166 to 173 (GMPNAGKS), 191 to 195 (FTTLV), 213 to 216 (DIPG), 283 to 286 (NKTD), and 314 to 316 (SAA) contribute to the GTP site. Residues Ser173 and Thr193 each coordinate Mg(2+).

This sequence belongs to the TRAFAC class OBG-HflX-like GTPase superfamily. OBG GTPase family. In terms of assembly, monomer. Mg(2+) is required as a cofactor.

The protein localises to the cytoplasm. Its function is as follows. An essential GTPase which binds GTP, GDP and possibly (p)ppGpp with moderate affinity, with high nucleotide exchange rates and a fairly low GTP hydrolysis rate. Plays a role in control of the cell cycle, stress response, ribosome biogenesis and in those bacteria that undergo differentiation, in morphogenesis control. The polypeptide is GTPase Obg (Shewanella amazonensis (strain ATCC BAA-1098 / SB2B)).